A 187-amino-acid polypeptide reads, in one-letter code: Protein GrpE (187 aa).

Over residues 1-11 (MTDSSNEHETE) the composition is skewed to basic and acidic residues. Residues 1 to 23 (MTDSSNEHETENPSVPNPDNEIQ) are disordered.

It belongs to the GrpE family. Homodimer.

Its subcellular location is the cytoplasm. Functionally, participates actively in the response to hyperosmotic and heat shock by preventing the aggregation of stress-denatured proteins, in association with DnaK and GrpE. It is the nucleotide exchange factor for DnaK and may function as a thermosensor. Unfolded proteins bind initially to DnaJ; upon interaction with the DnaJ-bound protein, DnaK hydrolyzes its bound ATP, resulting in the formation of a stable complex. GrpE releases ADP from DnaK; ATP binding to DnaK triggers the release of the substrate protein, thus completing the reaction cycle. Several rounds of ATP-dependent interactions between DnaJ, DnaK and GrpE are required for fully efficient folding. This Chlamydia felis (strain Fe/C-56) (Chlamydophila felis) protein is Protein GrpE.